The following is a 497-amino-acid chain: Cytochrome P450 71A18 (497 aa).

A helical transmembrane segment spans residues 4-24 (TLMVSLCLTTLLTLLLLKKFL). Position 439 (Cys-439) interacts with heme.

It belongs to the cytochrome P450 family. It depends on heme as a cofactor.

It is found in the membrane. This chain is Cytochrome P450 71A18 (CYP71A18), found in Arabidopsis thaliana (Mouse-ear cress).